Reading from the N-terminus, the 48-residue chain is DNA gyrase inhibitor YacG (48 aa).

Cys-9, Cys-12, Cys-28, and Cys-32 together coordinate Zn(2+).

It belongs to the DNA gyrase inhibitor YacG family. Interacts with GyrB. Requires Zn(2+) as cofactor.

Its function is as follows. Inhibits all the catalytic activities of DNA gyrase by preventing its interaction with DNA. Acts by binding directly to the C-terminal domain of GyrB, which probably disrupts DNA binding by the gyrase. This chain is DNA gyrase inhibitor YacG, found in Wigglesworthia glossinidia brevipalpis.